We begin with the raw amino-acid sequence, 2170 residues long: ATP-binding cassette sub-family A member 7 (2170 aa).

A helical transmembrane segment spans residues 22–42 (PIQLVVELLWPLFLFFILVAV). Over 43–547 (RHSHPPLEHH…DVFLRVLSRS (505 aa)) the chain is Extracellular. C75 and C222 form a disulfide bridge. N309 is a glycosylation site (N-linked (GlcNAc...) asparagine). The next 6 membrane-spanning stretches (helical) occupy residues 548-568 (LPLF…KAVV), 591-611 (LGWF…LVLV), 624-644 (VVVF…SFLL), 653-673 (LAAA…VLCV), 679-699 (LPLG…GFGC), and 733-753 (AFLL…EAVC). The ABC transporter 1 domain maps to 805–1036 (VSIRGLKKHF…LGCGYYLTLV (232 aa)). 839–846 (GHNGAGKT) is a binding site for ATP. A helical membrane pass occupies residues 847–867 (TTLSILSGLFPPSSGSASILG). The disordered stretch occupies residues 1044 to 1086 (THDLKGDTEDPRREKKSGSEGKTADTVLTRDGPHRSSQVPAPD). The segment covering 1045–1066 (HDLKGDTEDPRREKKSGSEGKT) has biased composition (basic and acidic residues). Residues 1257–1277 (IVLPALFVGLALFFTLIVPPF) traverse the membrane as a helical segment. Over 1278–1562 (GQYPPLQLSP…TLIASSVDVL (285 aa)) the chain is Extracellular. C1370 and C1384 are oxidised to a cystine. The next 6 helical transmembrane spans lie at 1563-1583 (VSIC…LVLI), 1609-1629 (FLWD…IFLA), 1646-1666 (LLLL…SFFF), 1674-1694 (VVLT…TFVL), 1708-1728 (ILKQ…LIDM), and 1754-1774 (IIGK…LITL). In terms of domain architecture, ABC transporter 2 spans 1818-2050 (LVLRDLTKVY…FGAGHTLTLR (233 aa)). 1852-1859 (GVNGAGKT) contributes to the ATP binding site. Residues 2129–2170 (QGEEEEGSGQETETREVSTPGLQHPKRVSRFLEDPSSVETVI) form a disordered region.

The protein belongs to the ABC transporter superfamily. ABCA family. N-glycosylated. In terms of tissue distribution, expressed in blood cells. Also detected in brain and ovary tissues (at protein level). Expressed in platelet.

It localises to the cell membrane. Its subcellular location is the golgi apparatus membrane. It is found in the early endosome membrane. The protein resides in the cell projection. The protein localises to the ruffle membrane. It localises to the phagocytic cup. Its subcellular location is the cytoplasm. Its function is as follows. ATP-binding cassette (ABC) transporter that plays a role in lipid homeostasis and macrophage-mediated phagocytosis. Binds APOA1 and may function in apolipoprotein-mediated phospholipid efflux from cells. May also mediate cholesterol efflux. May regulate cellular ceramide homeostasis during keratinocyte differentiation. Involved in lipid raft organization and CD1D localization on thymocytes and antigen-presenting cells, which plays an important role in natural killer T-cell development and activation. Plays a role in phagocytosis of apoptotic cells by macrophages. Macrophage phagocytosis is stimulated by APOA1 or APOA2, probably by stabilization of ABCA7. Also involved in phagocytic clearance of amyloid-beta by microglia cells and macrophages. Further limits amyloid-beta production by playing a role in the regulation of amyloid-beta A4 precursor protein (APP) endocytosis and/or processing. This chain is ATP-binding cassette sub-family A member 7 (Abca7), found in Rattus norvegicus (Rat).